The sequence spans 360 residues: Cell division protein DivIB (360 aa).

The segment at 1 to 54 (MTEKDSNVEESVLEVEQASQVELDSEQISPAEKESVLAEEKEFSTDVDIPEMTA) is disordered. Topologically, residues 1–139 (MTEKDSNVEE…VDIPSKVVWK (139 aa)) are cytoplasmic. Residues 17–28 (QASQVELDSEQI) show a composition bias toward polar residues. The segment covering 31-44 (AEKESVLAEEKEFS) has biased composition (basic and acidic residues). A helical membrane pass occupies residues 140 to 160 (AIPVLVTSLLLAALALYFISP). At 161–360 (TSKKKQIEVV…MEVGIYRYAS (200 aa)) the chain is on the extracellular side. In terms of domain architecture, POTRA spans 162 to 233 (SKKKQIEVVG…ATFTIHIKEY (72 aa)).

The protein belongs to the FtsQ/DivIB family. DivIB subfamily.

Its subcellular location is the cell membrane. Its function is as follows. Cell division protein that may be involved in stabilizing or promoting the assembly of the division complex. The chain is Cell division protein DivIB from Streptococcus suis (strain GZ1).